The chain runs to 410 residues: Peptide chain release factor subunit 1 (410 aa).

Belongs to the eukaryotic release factor 1 family. In terms of assembly, heterodimer of two subunits, one of which binds GTP.

The protein resides in the cytoplasm. Functionally, directs the termination of nascent peptide synthesis (translation) in response to the termination codons UAA, UAG and UGA. This Picrophilus torridus (strain ATCC 700027 / DSM 9790 / JCM 10055 / NBRC 100828 / KAW 2/3) protein is Peptide chain release factor subunit 1.